The primary structure comprises 103 residues: Small ribosomal subunit protein uS10 (103 aa).

This sequence belongs to the universal ribosomal protein uS10 family. As to quaternary structure, part of the 30S ribosomal subunit.

Involved in the binding of tRNA to the ribosomes. The protein is Small ribosomal subunit protein uS10 of Acinetobacter baylyi (strain ATCC 33305 / BD413 / ADP1).